The sequence spans 386 residues: Succinate--CoA ligase [ADP-forming] subunit beta (386 aa).

Positions 9-244 constitute an ATP-grasp domain; sequence KEILHKFNVP…YDEEVKEEIE (236 aa). Residues Lys46, 53 to 55, Glu99, Ser102, and Glu107 contribute to the ATP site; that span reads GRG. Positions 199 and 213 each coordinate Mg(2+). Substrate-binding positions include Asn264 and 321-323; that span reads GIM.

This sequence belongs to the succinate/malate CoA ligase beta subunit family. Heterotetramer of two alpha and two beta subunits. Requires Mg(2+) as cofactor.

It catalyses the reaction succinate + ATP + CoA = succinyl-CoA + ADP + phosphate. It carries out the reaction GTP + succinate + CoA = succinyl-CoA + GDP + phosphate. The protein operates within carbohydrate metabolism; tricarboxylic acid cycle; succinate from succinyl-CoA (ligase route): step 1/1. In terms of biological role, succinyl-CoA synthetase functions in the citric acid cycle (TCA), coupling the hydrolysis of succinyl-CoA to the synthesis of either ATP or GTP and thus represents the only step of substrate-level phosphorylation in the TCA. The beta subunit provides nucleotide specificity of the enzyme and binds the substrate succinate, while the binding sites for coenzyme A and phosphate are found in the alpha subunit. The protein is Succinate--CoA ligase [ADP-forming] subunit beta of Wolbachia pipientis subsp. Culex pipiens (strain wPip).